We begin with the raw amino-acid sequence, 25 residues long: M-poneritoxin-Na1b (25 aa).

It belongs to the non-disulfide-bridged peptide (NDBP) superfamily. Medium-length antimicrobial peptide (group 3) family. Ponericin-W subfamily. In terms of tissue distribution, expressed by the venom gland.

It localises to the secreted. It is found in the target cell membrane. Its function is as follows. Membrane-perturbating peptide with multiple activities. It is insecticidal, since it induces reversible paralysis in insects (L.cuprina) after 1 hour, but fails to kill flies. It shows a relatively strong and broad-spectrum antibacterial activity against both Gram-positive and Gram-negative bacteria (MIC&lt;20 uM). It is also anthelmintic, since it potently inhibits the larval development of the major pathogenic nematode of ruminants (H.contortus, IC(50)=2.8 uM). Interestingly, only at 10 uM, it increases adult males motility of the other nematode B.malayi for 24 hours post-treatment, followed by a reduction in motility for the rest of the experiment. It shows cytotoxic activity against HEK293 cells (EC(50)=4-6 uM) and induces hemolysis in human erythrocytes (EC(50)=40-62 uM). In addition, it causes an important increase in intracellular calcium concentration on neuronal and epithelial cell lines, which supports a non-specific membrane perturbation mechanism of action. In vivo, it induces pain by intraplantar injection into mice, suggesting a defensive function against vertebrate predators. The sequence is that of M-poneritoxin-Na1b from Neoponera apicalis (Ant).